Consider the following 60-residue polypeptide: Small ribosomal subunit protein eS31 (60 aa).

Zn(2+) contacts are provided by Cys-27, Cys-30, Cys-45, and Cys-48. Residues 27 to 48 form a C4-type zinc finger; it reads CPRCGPGVFMAEHLNRYACGKC.

It belongs to the eukaryotic ribosomal protein eS31 family. Part of the 30S ribosomal subunit. The cofactor is Zn(2+).

This is Small ribosomal subunit protein eS31 from Methanocaldococcus jannaschii (strain ATCC 43067 / DSM 2661 / JAL-1 / JCM 10045 / NBRC 100440) (Methanococcus jannaschii).